We begin with the raw amino-acid sequence, 56 residues long: Large ribosomal subunit protein bL32 (56 aa).

Basic residues predominate over residues 1–16 (MAVQKNKKSRSKRGMR). The segment at 1–36 (MAVQKNKKSRSKRGMRRSHDSLSTPQLSVDSTSGEL) is disordered. Positions 21-34 (SLSTPQLSVDSTSG) are enriched in polar residues.

This sequence belongs to the bacterial ribosomal protein bL32 family.

This Shewanella sediminis (strain HAW-EB3) protein is Large ribosomal subunit protein bL32.